The primary structure comprises 227 residues: Exodeoxyribonuclease (227 aa).

It carries out the reaction Exonucleolytic cleavage in the 3'- to 5'-direction to yield nucleoside 5'-phosphates.. 3'-5' exonuclease that preferentially uses ssDNA as substrate. Plays a role in group I intron homing. May play a role in the final step of host DNA degradation, by scavenging DNA into mononucleotides. In Escherichia coli (Bacteriophage T4), this protein is Exodeoxyribonuclease (dexA).